A 406-amino-acid polypeptide reads, in one-letter code: Lymphocyte transmembrane adapter 1 (406 aa).

Residues 1 to 25 form a disordered region; the sequence is MYTTPAPPEITRRSSEPSTQQGTLG. Residues 1–33 are Extracellular-facing; sequence MYTTPAPPEITRRSSEPSTQQGTLGSLEGEKGH. Residues 34 to 54 form a helical; Signal-anchor for type III membrane protein membrane-spanning segment; that stretch reads LLFPGFVVLVTIFLVVIVTCI. The Cytoplasmic portion of the chain corresponds to 55–406; the sequence is LWSRKKQKKR…LATETSGEEV (352 aa). A disordered region spans residues 109 to 131; the sequence is ESLLSRASDSPEPEVPQASGSLQ. A Phosphotyrosine modification is found at Tyr184. The interval 219-258 is disordered; sequence AEGGHAGCGKATDRTGVWAPGLQGSNSLSEGDDSSQSSND. A compositionally biased stretch (low complexity) spans 242 to 258; sequence GSNSLSEGDDSSQSSND. Phosphotyrosine occurs at positions 259, 285, and 352. Residues 358–406 are disordered; that stretch reads PELEGKDWKQGPGTWHPSDERTPSDQAGKFCEAVYPAGSLATETSGEEV.

When phosphorylated, interacts with GRB2, PIK3R1 and GRAP2. Phosphorylated on tyrosines upon TCR or BCR activation; which leads to the recruitment of GRB2, PIK3R1 and GRAP2.

It is found in the cell membrane. Negatively regulates TCR (T-cell antigen receptor)-mediated signaling in T-cells and BCR (B-cell antigen receptor)-mediated signaling in B-cells. This Rattus norvegicus (Rat) protein is Lymphocyte transmembrane adapter 1 (Lax1).